The primary structure comprises 274 residues: Thymidylate synthase (274 aa).

Arg21 serves as a coordination point for dUMP. His51 is a binding site for (6R)-5,10-methylene-5,6,7,8-tetrahydrofolate. 123 to 124 (RR) contributes to the dUMP binding site. Cys156 serves as the catalytic Nucleophile. DUMP contacts are provided by residues 176 to 179 (RSAD), Asn187, and 217 to 219 (HIY). Asp179 serves as a coordination point for (6R)-5,10-methylene-5,6,7,8-tetrahydrofolate. Ala273 contacts (6R)-5,10-methylene-5,6,7,8-tetrahydrofolate.

This sequence belongs to the thymidylate synthase family. Bacterial-type ThyA subfamily. Homodimer.

The protein resides in the cytoplasm. The catalysed reaction is dUMP + (6R)-5,10-methylene-5,6,7,8-tetrahydrofolate = 7,8-dihydrofolate + dTMP. Its pathway is pyrimidine metabolism; dTTP biosynthesis. Functionally, catalyzes the reductive methylation of 2'-deoxyuridine-5'-monophosphate (dUMP) to 2'-deoxythymidine-5'-monophosphate (dTMP) while utilizing 5,10-methylenetetrahydrofolate (mTHF) as the methyl donor and reductant in the reaction, yielding dihydrofolate (DHF) as a by-product. This enzymatic reaction provides an intracellular de novo source of dTMP, an essential precursor for DNA biosynthesis. The protein is Thymidylate synthase of Flavobacterium psychrophilum (strain ATCC 49511 / DSM 21280 / CIP 103535 / JIP02/86).